We begin with the raw amino-acid sequence, 1293 residues long: Late blight resistance protein R1-A (1293 aa).

Coiled-coil stretches lie at residues 423–446 (RYSD…ESLQ) and 538–560 (PRMN…KLLN). An NB-ARC domain is found at 539–826 (RMNEEIVGFE…SEAFIKSSEG (288 aa)). 572-579 (GMPGLGKT) is a binding site for ATP. LRR repeat units lie at residues 876–899 (AEEN…VYSH), 956–981 (FKFL…VYLK), 1027–1049 (MVKL…LLEN), 1056–1079 (LETL…KTPN), 1102–1125 (PIRL…ISAP), 1149–1172 (LKHL…KVSN), 1175–1197 (FPQL…ADDA), 1198–1222 (FPNL…FMDI), and 1235–1259 (ESVV…NFKL).

This sequence belongs to the disease resistance NB-LRR family.

Its subcellular location is the cytoplasm. The protein resides in the membrane. Its function is as follows. Confers resistance to late blight (Phytophthora infestans) races carrying the avirulence gene Avr1. Resistance proteins guard the plant against pathogens that contain an appropriate avirulence protein via an indirect interaction with this avirulence protein. That triggers a defense system including the hypersensitive response, which restricts the pathogen growth. This chain is Late blight resistance protein R1-A (R1A), found in Solanum demissum (Wild potato).